A 146-amino-acid polypeptide reads, in one-letter code: Hemoglobin subunit beta-2 (146 aa).

The region spanning 2–146 (HWTAEEKQLV…VAHALAYHYH (145 aa)) is the Globin domain. 2 residues coordinate heme b: His63 and His92.

Belongs to the globin family. There are three forms of hemoglobin in Sphenodon: A, A' and D. Hb A is a tetramer of two alpha-A and two beta-1, Hb A' is a tetramer of two alpha-a and two beta-2, Hb D is a tetramer of two alpha-D and two beta-2.

In terms of biological role, involved in oxygen transport from the lung to the various peripheral tissues. The chain is Hemoglobin subunit beta-2 (HBB2) from Sphenodon punctatus (Tuatara).